The following is a 123-amino-acid chain: cAMP-responsive element-binding protein-like 2 (123 aa).

Positions M1–I24 are disordered. Residues K10–P21 show a composition bias toward basic residues. Positions K23 to S86 constitute a bZIP domain. The interval K29–R60 is basic motif. A leucine-zipper region spans residues I62 to L69. The disordered stretch occupies residues T93 to N123. The segment covering D114 to N123 has biased composition (polar residues).

It belongs to the bZIP family. ATF subfamily. As to quaternary structure, interacts with CREB1; regulates CREB1 phosphorylation, stability and transcriptional activity. Phosphorylated by AMPK.

It is found in the nucleus. Functionally, probable regulator of CREB1 transcriptional activity which is involved in adipose cells differentiation. May also play a regulatory role in the cell cycle. In Rattus norvegicus (Rat), this protein is cAMP-responsive element-binding protein-like 2 (Crebl2).